Consider the following 943-residue polypeptide: uncharacterized protein (943 aa).

The residue at position 1 (M1) is an N-acetylmethionine. 5 disordered regions span residues 37–63 (DETP…QQQQ), 152–177 (KHQF…DDEV), 315–381 (LPMN…QQLQ), 397–472 (QNVP…PLKK), and 515–546 (EREA…ESDD). Polar residues predominate over residues 41–58 (ISRNGNDSNINIQPSSVP). Residues 152-162 (KHQFGKSKKNT) are compositionally biased toward basic residues. Residues 318–358 (NNYNNHPGQFQNTPPVMPSGQQPPQQPRTLSLTNGPRYSPQ) are compositionally biased toward polar residues. The span at 367 to 381 (QQISQRQQQQQQQLQ) shows a compositional bias: low complexity. Residues 397–409 (QNVPQGFNPWSPN) are compositionally biased toward polar residues. Positions 417 to 433 (SMKQPISQSSISSKNNS) are enriched in low complexity. Positions 434-470 (AYSIPNVQNNSLTTFSPSSPTDATAMPNSTKQGSSPL) are enriched in polar residues. A compositionally biased stretch (basic and acidic residues) spans 515-533 (EREALVEEKEKERAEKNTE). Residues S553, S586, and S619 each carry the phosphoserine modification. Residues 616–639 (EFPSPGKYNSNSDNGEMNTTNEVD) are disordered. The segment covering 622 to 639 (KYNSNSDNGEMNTTNEVD) has biased composition (polar residues). Position 649 is a phosphoserine (S649). The tract at residues 654-683 (IPERDPKRNVSDATIKRRESDGNGRRLSNV) is disordered. A compositionally biased stretch (basic and acidic residues) spans 655 to 677 (PERDPKRNVSDATIKRRESDGNG). Phosphoserine occurs at positions 681, 766, and 771.

This is an uncharacterized protein from Saccharomyces cerevisiae (strain ATCC 204508 / S288c) (Baker's yeast).